A 1009-amino-acid polypeptide reads, in one-letter code: Protein-tyrosine kinase 2-beta (1009 aa).

The region spanning 39-359 (RILKVCFYSN…GYCRLQGEHK (321 aa)) is the FERM domain. Phosphoserine is present on residues S361, S375, and S399. Y402 is modified (phosphotyrosine; by autocatalysis). Residues 425–683 (VVLNRILGEG…ELVCSLSDIY (259 aa)) form the Protein kinase domain. ATP contacts are provided by residues 431-439 (LGEGFFGEV), K457, and 503-509 (ELYPYGE). D549 acts as the Proton acceptor in catalysis. Y579, Y580, and Y722 each carry phosphotyrosine. Residues 702–725 (PKILEPTAFQEPPPKPSRPKYKHP) form a disordered region. A Phosphoserine modification is found at S762. T765 is modified (phosphothreonine). The interaction with TGFB1I1 stretch occupies residues 801–1009 (KIKMRQVLDR…VANLAHPPAE (209 aa)). Residue Y834 is modified to Phosphotyrosine. S839 bears the Phosphoserine mark. T842 bears the Phosphothreonine mark. Y849 is subject to Phosphotyrosine. Phosphoserine is present on S866. Positions 868–1009 (QPTANLDRTD…VANLAHPPAE (142 aa)) are focal adhesion targeting (FAT). Y881 is subject to Phosphotyrosine.

It belongs to the protein kinase superfamily. Tyr protein kinase family. FAK subfamily. Homodimer, or homooligomer. Interacts with NPHP1, ASAP1, ASAP2, ARHGAP26, SKAP2 and TGFB1I1. The Tyr-402 phosphorylated form interacts with SRC (via SH2 domain) and SRC family members. Forms a signaling complex with EPHA1, LCK and phosphatidylinositol 3-kinase; upon activation by EFNA1. Interacts with GRB2 (via SH2 domain). Interacts with P53/TP53 and MDM2. Interacts with MYLK. Interacts with BCAR1. Interacts with RB1CC1. Interacts with RHOU. Interacts with VAV1. Interacts with PDPK1. Interacts with LPXN and PTPN12. Interacts with SIRPA and SH2D3C. Interacts (hypophosphorylated) with PXN. Interacts with ARHGAP10. Interacts with KCNA2. Phosphorylated on tyrosine residues in response to various stimuli that elevate the intracellular calcium concentration; this activation is indirect and may be mediated by production of reactive oxygen species (ROS). Tyr-402 is the major autophosphorylation site, but other kinases can also phosphorylate Tyr-402. Autophosphorylation occurs in trans, i.e. one subunit of the dimeric receptor phosphorylates tyrosine residues on the other subunit. Phosphorylation at Tyr-402 promotes interaction with SRC and SRC family members, leading to phosphorylation at Tyr-579; Tyr-580 and Tyr-881. Phosphorylation at Tyr-881 is important for interaction with GRB2. Phosphorylated on tyrosine residues upon activation of FGR and PKC. Recruitment by NPHP1 to cell matrix adhesions initiates Tyr-402 phosphorylation. In monocytes, adherence to substrata is required for tyrosine phosphorylation and kinase activation. Angiotensin II, thapsigargin and L-alpha-lysophosphatidic acid (LPA) also induce autophosphorylation and increase kinase activity. Phosphorylation by MYLK promotes ITGB2 activation and is thus essential to trigger neutrophil transmigration during lung injury. Dephosphorylated by PTPN12. In terms of tissue distribution, highly expressed in pulmonary vein endothelial cells, lung and brain (at protein level). Isoform 1 is expressed at high levels in the brain (hippocampus, cerebral cortex and olfactory bulb) and poorly in the spleen and other tissues, whereas isoforms 2 and 3 are expressed in the spleen and brain (highest in cerebellum).

The protein localises to the cytoplasm. It is found in the perinuclear region. The protein resides in the cell membrane. Its subcellular location is the cell projection. It localises to the lamellipodium. The protein localises to the cell cortex. It is found in the nucleus. The protein resides in the cell junction. Its subcellular location is the focal adhesion. It carries out the reaction L-tyrosyl-[protein] + ATP = O-phospho-L-tyrosyl-[protein] + ADP + H(+). Activated in response to stimuli that lead to increased intracellular Ca(2+) levels; this activation is indirect and may be mediated by calcium-mediated production of reactive oxygen species (ROS). Activated by autophosphorylation at Tyr-402; this creates a binding site for SRC family kinases and leads to phosphorylation at additional tyrosine residues. Phosphorylation at Tyr-402, Tyr-579 and Tyr-580 is required for optimal kinase activity. In terms of biological role, non-receptor protein-tyrosine kinase that regulates reorganization of the actin cytoskeleton, cell polarization, cell migration, adhesion, spreading and bone remodeling. Plays a role in the regulation of the humoral immune response, and is required for normal levels of marginal B-cells in the spleen and normal migration of splenic B-cells. Required for normal macrophage polarization and migration towards sites of inflammation. Regulates cytoskeleton rearrangement and cell spreading in T-cells, and contributes to the regulation of T-cell responses. Promotes osteoclastic bone resorption; this requires both PTK2B/PYK2 and SRC. May inhibit differentiation and activity of osteoprogenitor cells. Functions in signaling downstream of integrin and collagen receptors, immune receptors, G-protein coupled receptors (GPCR), cytokine, chemokine and growth factor receptors, and mediates responses to cellular stress. Forms multisubunit signaling complexes with SRC and SRC family members upon activation; this leads to the phosphorylation of additional tyrosine residues, creating binding sites for scaffold proteins, effectors and substrates. Regulates numerous signaling pathways. Promotes activation of phosphatidylinositol 3-kinase and of the AKT1 signaling cascade. Promotes activation of NOS3. Regulates production of the cellular messenger cGMP. Promotes activation of the MAP kinase signaling cascade, including activation of MAPK1/ERK2, MAPK3/ERK1 and MAPK8/JNK1. Promotes activation of Rho family GTPases, such as RHOA and RAC1. Recruits the ubiquitin ligase MDM2 to P53/TP53 in the nucleus, and thereby regulates P53/TP53 activity, P53/TP53 ubiquitination and proteasomal degradation. Acts as a scaffold, binding to both PDPK1 and SRC, thereby allowing SRC to phosphorylate PDPK1 at 'Tyr-9, 'Tyr-373', and 'Tyr-376'. Promotes phosphorylation of NMDA receptors by SRC family members, and thereby contributes to the regulation of NMDA receptor ion channel activity and intracellular Ca(2+) levels. May also regulate potassium ion transport by phosphorylation of potassium channel subunits. Phosphorylates SRC; this increases SRC kinase activity. Phosphorylates ASAP1, NPHP1, KCNA2 and SHC1. Promotes phosphorylation of ASAP2, RHOU and PXN; this requires both SRC and PTK2/PYK2. The chain is Protein-tyrosine kinase 2-beta (Ptk2b) from Rattus norvegicus (Rat).